Here is a 501-residue protein sequence, read N- to C-terminus: MEQQDQSMKEGRLTLVLALATLIAAFGSSFQYGYNVAAVNSPALLMQQFYNETYYGRTGEFMEDFPLTLLWSVTVSMFPFGGFIGSLLVGPLVNKFGRKGALLFNNIFSIVPAILMGCSRVATSFELIIISRLLVGICAGVSSNVVPMYLGELAPKNLRGALGVVPQLFITVGILVAQIFGLRNLLANVDGWPILLGLTGVPAALQLLLLPFFPESPRYLLIQKKDEAAAKKALQTLRGWDSVDREVAEIRQEDEAEKAAGFISVLKLFRMRSLRWQLLSIIVLMGGQQLSGVNAIYYYADQIYLSAGVPEEHVQYVTAGTGAVNVVMTFCAVFVVELLGRRLLLLLGFSICLIACCVLTAALALQDTVSWMPYISIVCVISYVIGHALGPSPIPALLITEIFLQSSRPSAFMVGGSVHWLSNFTVGLIFPFIQEGLGPYSFIVFAVICLLTTIYIFLIVPETKAKTFIEINQIFTKMNKVSEVYPEKEELKELPPVTSEQ.

Met1 bears the N-acetylmethionine mark. The Cytoplasmic portion of the chain corresponds to 1 to 18; sequence MEQQDQSMKEGRLTLVLA. Residues 19–39 traverse the membrane as a helical segment; it reads LATLIAAFGSSFQYGYNVAAV. Tyr32 contributes to the D-fructose binding site. The Extracellular segment spans residues 40–68; the sequence is NSPALLMQQFYNETYYGRTGEFMEDFPLT. Asn51 is a glycosylation site (N-linked (GlcNAc...) asparagine). The helical transmembrane segment at 69 to 91 threads the bilayer; the sequence is LLWSVTVSMFPFGGFIGSLLVGP. The Cytoplasmic portion of the chain corresponds to 92-98; the sequence is LVNKFGR. Residues 99-119 traverse the membrane as a helical segment; the sequence is KGALLFNNIFSIVPAILMGCS. The Extracellular segment spans residues 120-126; that stretch reads RVATSFE. A helical transmembrane segment spans residues 127–149; that stretch reads LIIISRLLVGICAGVSSNVVPMY. Residues 150 to 161 lie on the Cytoplasmic side of the membrane; that stretch reads LGELAPKNLRGA. The chain crosses the membrane as a helical span at residues 162-182; that stretch reads LGVVPQLFITVGILVAQIFGL. Gln167 serves as a coordination point for D-fructose. Residues 183 to 192 are Extracellular-facing; sequence RNLLANVDGW. A helical transmembrane segment spans residues 193–213; it reads PILLGLTGVPAALQLLLLPFF. Over 214 to 277 the chain is Cytoplasmic; that stretch reads PESPRYLLIQ…LFRMRSLRWQ (64 aa). Residues 278 to 298 traverse the membrane as a helical segment; that stretch reads LLSIIVLMGGQQLSGVNAIYY. D-fructose is bound by residues Gln288 and 296–298; that span reads IYY. At 299–313 the chain is on the extracellular side; sequence YADQIYLSAGVPEEH. The helical transmembrane segment at 314–334 threads the bilayer; sequence VQYVTAGTGAVNVVMTFCAVF. Over 335–342 the chain is Cytoplasmic; sequence VVELLGRR. A helical membrane pass occupies residues 343 to 363; the sequence is LLLLLGFSICLIACCVLTAAL. Residues 364-371 are Extracellular-facing; that stretch reads ALQDTVSW. A helical transmembrane segment spans residues 372-394; that stretch reads MPYISIVCVISYVIGHALGPSPI. His387 contributes to the D-fructose binding site. The Cytoplasmic portion of the chain corresponds to 395–412; that stretch reads PALLITEIFLQSSRPSAF. The chain crosses the membrane as a helical span at residues 413 to 433; it reads MVGGSVHWLSNFTVGLIFPFI. 419 to 420 provides a ligand contact to D-fructose; it reads HW. Over 434–439 the chain is Extracellular; it reads QEGLGP. The helical transmembrane segment at 440-460 threads the bilayer; it reads YSFIVFAVICLLTTIYIFLIV. Residues 461 to 501 are Cytoplasmic-facing; that stretch reads PETKAKTFIEINQIFTKMNKVSEVYPEKEELKELPPVTSEQ.

In terms of tissue distribution, detected in skeletal muscle, and in jejunum brush border membrane and basolateral membrane (at protein level). Expressed in small intestine, and at much lower levels in kidney, skeletal muscle, and adipose tissue.

Its subcellular location is the apical cell membrane. It localises to the cell membrane. The protein localises to the sarcolemma. It catalyses the reaction D-fructose(out) = D-fructose(in). The uptake of 2-deoxyglucose is inhibited by cytochalasin B. Fructose transport is inhibited by the flavonoids epigallocatechin gallate and apigenin but not quercetin. Functionally, functions as a fructose transporter that has only low activity with other monosaccharides. Can mediate the uptake of 2-deoxyglucose, but with low efficiency. Essential for fructose uptake in the small intestine. Plays a role in the regulation of salt uptake and blood pressure in response to dietary fructose. Required for the development of high blood pressure in response to high dietary fructose intake. The chain is Solute carrier family 2, facilitated glucose transporter member 5 from Homo sapiens (Human).